The sequence spans 957 residues: Atromentin synthetase (957 aa).

The tract at residues 59–464 is adenylation (A) domain; sequence SVQARTFQDF…SGRIKDTVIV (406 aa). The Carrier domain occupies 596-674; sequence TPSTDDEKAL…DLAKYVNGLV (79 aa). The thiolation and peptide carrier (T) domain stretch occupies residues 601 to 671; it reads DEKALAAIYA…IVSDLAKYVN (71 aa). Serine 633 is subject to O-(pantetheine 4'-phosphoryl)serine. The interval 697-947 is thioesterase (TE) domain; the sequence is PIFFVHPGVG…FDHVPQFQKI (251 aa).

It belongs to the ATP-dependent AMP-binding enzyme family.

It participates in secondary metabolite biosynthesis. In terms of biological role, the L-tyrosine:2-oxoglutarate aminotransferase atrD and the atromentin synthetase atrA catalyze consecutive steps to turn over L-tyrosine into atromentin, which represents the generic precursor molecule for the entire terphenylquinone and pulvinic acid family of pigments, which are widely distributed secondary metabolites in homobasidiomycetes. The first step is catalyzed by atrD which converts L-tyrosine in to 4-hydroxyphenylpyruvate (4-HPP). Adenylation of two 4-HPP monomers by the atrA adenylation (A) domain, ester bond formation between monomers and atrA, and symmetric C-C-bond formation between two monomers by atrA leads to atromentin. The chain is Atromentin synthetase from Tapinella panuoides (Oyster rollrim mushroom).